The sequence spans 905 residues: Alanine--tRNA ligase (905 aa).

Positions 569, 573, 693, and 697 each coordinate Zn(2+).

This sequence belongs to the class-II aminoacyl-tRNA synthetase family. Zn(2+) is required as a cofactor.

The protein resides in the cytoplasm. It carries out the reaction tRNA(Ala) + L-alanine + ATP = L-alanyl-tRNA(Ala) + AMP + diphosphate. In terms of biological role, catalyzes the attachment of alanine to tRNA(Ala) in a two-step reaction: alanine is first activated by ATP to form Ala-AMP and then transferred to the acceptor end of tRNA(Ala). Also edits incorrectly charged Ser-tRNA(Ala) and Gly-tRNA(Ala) via its editing domain. This chain is Alanine--tRNA ligase, found in Roseiflexus sp. (strain RS-1).